The following is a 274-amino-acid chain: uncharacterized protein (274 aa).

This is an uncharacterized protein from Caenorhabditis elegans.